The sequence spans 281 residues: MREPRVALESAVLTHGLPYPLNLEVALALEEAVREEGATPKTIALVRGEVRVGLSPEEMEALAAGGAEKASLWNLAALLAQGRSAGTTVAATVHLAHLHGIPVFATGGIGGVHPEPYDESADLVALSRTPILVVSSGPKAILDLRATLERLETLGVSVVGYRTDRLPAFFSPDSPFPVPARVDTPMEAARVYLRARALGLGGVLLVNPVSQGLPYEQVALWVEEAGRMAAREGVFGKALTPYLLRKLSELSSGETDRVNRRLLLENARLAARVALALAGLE.

E9 (proton donor) is an active-site residue. The substrate site is built by K69 and V89. Mn(2+) is bound at residue D118. Substrate is bound at residue 120-122 (SAD). K139 functions as the Nucleophile in the catalytic mechanism.

Belongs to the pseudouridine-5'-phosphate glycosidase family. Homotrimer. Mn(2+) serves as cofactor.

The enzyme catalyses D-ribose 5-phosphate + uracil = psi-UMP + H2O. In terms of biological role, catalyzes the reversible cleavage of pseudouridine 5'-phosphate (PsiMP) to ribose 5-phosphate and uracil. Functions biologically in the cleavage direction, as part of a pseudouridine degradation pathway. This chain is Pseudouridine-5'-phosphate glycosidase, found in Thermus thermophilus (strain ATCC BAA-163 / DSM 7039 / HB27).